We begin with the raw amino-acid sequence, 86 residues long: Cerebrin prohormone (86 aa).

An N-terminal signal peptide occupies residues M1–A27. Positions V28–V64 are excised as a propeptide. I83 is subject to Isoleucine amide.

As to expression, expressed only in cerebral ganglion.

Its subcellular location is the secreted. Its function is as follows. May function as a hormone and may play a neuromodulatory role. This Aplysia californica (California sea hare) protein is Cerebrin prohormone (CBPH).